A 61-amino-acid chain; its full sequence is MFPLKKSLLLLFFLGTINFSFCEEERNAEEERRDDPEERDVAMEKRVLPLVGNLLNDLLGK.

Residues 1 to 22 (MFPLKKSLLLLFFLGTINFSFC) form the signal peptide. A propeptide spanning residues 23 to 44 (EEERNAEEERRDDPEERDVAME) is cleaved from the precursor. Position 59 is a leucine amide (Leu-59).

It belongs to the frog skin active peptide (FSAP) family. Temporin subfamily. In terms of tissue distribution, expressed by the skin glands.

Its subcellular location is the secreted. Its function is as follows. Antimicrobial peptide. The chain is Temporin-CDYa from Rana dybowskii (Dybovsky's frog).